The sequence spans 396 residues: Methionine import ATP-binding protein MetN 2 (396 aa).

Residues 41 to 280 (VSFELVGKVF…PRHGATRALL (240 aa)) form the ABC transporter domain. 77–84 (GRSGAGKS) contributes to the ATP binding site.

It belongs to the ABC transporter superfamily. Methionine importer (TC 3.A.1.24) family. In terms of assembly, the complex is composed of two ATP-binding proteins (MetN), two transmembrane proteins (MetI) and a solute-binding protein (MetQ).

It is found in the cell inner membrane. It carries out the reaction L-methionine(out) + ATP + H2O = L-methionine(in) + ADP + phosphate + H(+). It catalyses the reaction D-methionine(out) + ATP + H2O = D-methionine(in) + ADP + phosphate + H(+). Functionally, part of the ABC transporter complex MetNIQ involved in methionine import. Responsible for energy coupling to the transport system. This chain is Methionine import ATP-binding protein MetN 2, found in Burkholderia pseudomallei (strain 1710b).